Here is a 434-residue protein sequence, read N- to C-terminus: Adenylosuccinate synthetase (434 aa).

GTP-binding positions include 15-21 (GDEGKGK) and 43-45 (GHT). Aspartate 16 (proton acceptor) is an active-site residue. Mg(2+) is bound by residues aspartate 16 and glycine 43. IMP is bound by residues 16-19 (DEGK), 41-44 (NAGH), threonine 133, arginine 147, glutamine 228, threonine 243, and arginine 307. Residue histidine 44 is the Proton donor of the active site. 303–309 (SVTGRAR) provides a ligand contact to substrate. GTP-binding positions include arginine 309, 335–337 (KLD), and 418–420 (STG).

The protein belongs to the adenylosuccinate synthetase family. As to quaternary structure, homodimer. Requires Mg(2+) as cofactor.

Its subcellular location is the cytoplasm. It catalyses the reaction IMP + L-aspartate + GTP = N(6)-(1,2-dicarboxyethyl)-AMP + GDP + phosphate + 2 H(+). It functions in the pathway purine metabolism; AMP biosynthesis via de novo pathway; AMP from IMP: step 1/2. Its function is as follows. Plays an important role in the de novo pathway of purine nucleotide biosynthesis. Catalyzes the first committed step in the biosynthesis of AMP from IMP. This chain is Adenylosuccinate synthetase, found in Neisseria meningitidis serogroup C / serotype 2a (strain ATCC 700532 / DSM 15464 / FAM18).